The sequence spans 515 residues: Slowpoke-binding protein (515 aa).

Residues 1 to 31 form a disordered region; the sequence is MFKFNKAAQQQRIDNRNSAVTGHDPFVRPPV. Residues 7–20 are compositionally biased toward polar residues; the sequence is AAQQQRIDNRNSAV. Phosphoserine is present on residues serine 54 and serine 79. Polar residues predominate over residues 73–82; it reads SSNRSASSEQ. The segment at 73 to 94 is disordered; it reads SSNRSASSEQDNSDLSEHSEKS. Residues 191–203 form an interaction with Slo region; it reads NWFLVTDASVRTD. The interval 483–503 is disordered; sequence SLSEANSPCTPPSTPHDRRTG.

Interacts specifically with Slo; which activates Slo activity. Interacts with 14-3-3-zeta when phosphorylated. Forms a heterotetrameric complex containing phosphorylated Slob, Slo and 14-3-3-zeta, which represses Slo activity due to the indirect interaction between Slo and 14-3-3-zeta. Post-translationally, phosphorylated. Phosphorylation of Ser-54 and Ser-79 is required for the interaction with 14-3-3-zeta but not with that of Slo. Expressed in head. In larval brain, it is expressed in the mushroom body. Also expressed in larval muscles.

Its subcellular location is the cytoplasm. Its function is as follows. Regulator of calcium-activated channel Slo. Increases or decreases the voltage sensitivity of Slo, depending on the absence or presence of 14-3-3-zeta in the complex, respectively. This is Slowpoke-binding protein (Slob) from Drosophila melanogaster (Fruit fly).